A 181-amino-acid chain; its full sequence is ATP-dependent protease subunit HslV (181 aa).

Residue T5 is part of the active site. Na(+)-binding residues include S162, C165, and T168.

Belongs to the peptidase T1B family. HslV subfamily. A double ring-shaped homohexamer of HslV is capped on each side by a ring-shaped HslU homohexamer. The assembly of the HslU/HslV complex is dependent on binding of ATP.

The protein resides in the cytoplasm. The enzyme catalyses ATP-dependent cleavage of peptide bonds with broad specificity.. With respect to regulation, allosterically activated by HslU binding. Its function is as follows. Protease subunit of a proteasome-like degradation complex believed to be a general protein degrading machinery. This Campylobacter hominis (strain ATCC BAA-381 / DSM 21671 / CCUG 45161 / LMG 19568 / NCTC 13146 / CH001A) protein is ATP-dependent protease subunit HslV.